The chain runs to 415 residues: Heterogeneous nuclear ribonucleoprotein F (415 aa).

The residue at position 1 (methionine 1) is an N-acetylmethionine. Residue methionine 2 is modified to N-acetylmethionine; in Heterogeneous nuclear ribonucleoprotein F, N-terminally processed. The region spanning 13 to 85 is the RRM 1 domain; the sequence is VKLRGLPWSC…ESMGHRYIEV (73 aa). Lysine 72 participates in a covalent cross-link: Glycyl lysine isopeptide (Lys-Gly) (interchain with G-Cter in SUMO). An interaction with RNA region spans residues 81-86; that stretch reads RYIEVF. Lysine 87 is covalently cross-linked (Glycyl lysine isopeptide (Lys-Gly) (interchain with G-Cter in SUMO2)). A phosphoserine mark is found at serine 104, serine 107, and serine 161. The RRM 2 domain maps to 111 to 188; that stretch reads GFVRLRGLPF…RYIEVFKSSQ (78 aa). Lysine 167 is covalently cross-linked (Glycyl lysine isopeptide (Lys-Gly) (interchain with G-Cter in SUMO2)). Residues 179–184 are interaction with RNA; the sequence is RYIEVF. Lysine 185 is covalently cross-linked (Glycyl lysine isopeptide (Lys-Gly) (interchain with G-Cter in SUMO2)). Phosphoserine occurs at positions 187, 193, and 195. Lysine 200 bears the N6-acetyllysine; alternate mark. Lysine 200 participates in a covalent cross-link: Glycyl lysine isopeptide (Lys-Gly) (interchain with G-Cter in SUMO2); alternate. At threonine 215 the chain carries Phosphothreonine. Position 224 is an N6-acetyllysine; alternate (lysine 224). Lysine 224 is covalently cross-linked (Glycyl lysine isopeptide (Lys-Gly) (interchain with G-Cter in SUMO2); alternate). Residue serine 265 is modified to Phosphoserine. Positions 289–366 constitute an RRM 3 domain; the sequence is HCVHMRGLPY…IELFLNSTTG (78 aa). The segment at 355-360 is interaction with RNA; it reads RYIELF.

In terms of assembly, identified in the spliceosome C complex. Interacts with AGO1, AGO2, TBP and TXNL4/DIM1. Post-translationally, sumoylated.

The protein localises to the nucleus. Its subcellular location is the nucleoplasm. Its function is as follows. Component of the heterogeneous nuclear ribonucleoprotein (hnRNP) complexes which provide the substrate for the processing events that pre-mRNAs undergo before becoming functional, translatable mRNAs in the cytoplasm. Plays a role in the regulation of alternative splicing events. Binds G-rich sequences in pre-mRNAs and keeps target RNA in an unfolded state. This chain is Heterogeneous nuclear ribonucleoprotein F (HNRNPF), found in Macaca fascicularis (Crab-eating macaque).